A 714-amino-acid polypeptide reads, in one-letter code: Probable metal-nicotianamine transporter YSL5 (714 aa).

The interval 17–44 is disordered; the sequence is HELQETGFSPETEKVKNKNFEEDEEEED. Basic and acidic residues predominate over residues 27–36; sequence ETEKVKNKNF. Helical transmembrane passes span 67–87, 90–110, 135–155, 175–195, 236–256, 295–315, 340–360, 413–433, 445–465, 477–497, 531–551, 593–613, and 631–651; these read AFVV…KLNL, GIIP…VKTW, CVVA…LFGM, LGWI…SVVP, VLGK…FFTG, IINI…WPLI, VFIA…KVLS, IPTW…TAIL, ILVI…GAGL, LAIF…LAGL, FVSQ…VFWL, LVLC…KDSL, and FFLG…LFIW.

Belongs to the YSL (TC 2.A.67.2) family.

It is found in the membrane. May be involved in the transport of nicotianamine-chelated metals. The protein is Probable metal-nicotianamine transporter YSL5 (YSL5) of Arabidopsis thaliana (Mouse-ear cress).